A 347-amino-acid polypeptide reads, in one-letter code: Protein RecA (347 aa).

Position 66-73 (66-73 (GPESSGKT)) interacts with ATP. The tract at residues 328-347 (MPKPNAPKATDEALDETGTD) is disordered.

Belongs to the RecA family.

The protein resides in the cytoplasm. Can catalyze the hydrolysis of ATP in the presence of single-stranded DNA, the ATP-dependent uptake of single-stranded DNA by duplex DNA, and the ATP-dependent hybridization of homologous single-stranded DNAs. It interacts with LexA causing its activation and leading to its autocatalytic cleavage. The sequence is that of Protein RecA from Hydrogenovibrio crunogenus (strain DSM 25203 / XCL-2) (Thiomicrospira crunogena).